We begin with the raw amino-acid sequence, 184 residues long: Protein CPn_0803/CP_1068/CPj0803/CpB0832 (184 aa).

The protein belongs to the chlamydial CPn_0803/CT_584/TC_0873 family.

In Chlamydia pneumoniae (Chlamydophila pneumoniae), this protein is Protein CPn_0803/CP_1068/CPj0803/CpB0832.